We begin with the raw amino-acid sequence, 1830 residues long: Guanine nucleotide exchange factor SPIKE 1 (1830 aa).

M1 carries the N-acetylmethionine modification. Residues N285–S304 are disordered. Residues S289–S304 show a composition bias toward low complexity. A C2 DOCK-type domain is found at F463–C622. At S1051 the chain carries Phosphoserine. T1079 is subject to Phosphothreonine. A Phosphoserine modification is found at S1095. The DOCKER domain occupies M1379 to S1828.

The protein belongs to the DOCK family. Homodimer. Component of SCAR/WAVE and ARP2/3 complexes. Interacts directly with ARAC4/ROP2, ARAC1/ROP3, ARAC5/ROP4, ARAC6/ROP5, ARAC8/ROP10, ARAC9/ROP8, SCAR1, SCAR2, SCAR3, SCAR4, ABI1, ABI2, ABI3 and ABI4. Binds to the inactive GDP-bound form of ARAC3/ROP6. In terms of tissue distribution, expressed ubiquitously, in roots and aerial organs.

Its subcellular location is the cytoplasm. It is found in the endoplasmic reticulum membrane. The protein resides in the nucleus. Its function is as follows. Guanine nucleotide exchange factor (GEF) for Rho and Rac. GEF proteins activate small GTPases by exchanging bound GDP for free GTP. Controls actin polymerization via the two heteromeric complexes WAVE and actin-related protein (ARP) 2/3. Involved in cytoskeletal reorganization required for cell shape (e.g. trichome and cotyledon) control and tissue development. Prevents cortical microtubules organization into parallel arrays oriented perpendicular to the axis of cell elongation to limit anisotropic cell growth during petal development, probably by triggering ARAC4/ROP2 and ARAC3/ROP6 activity. Promotes polarized growth and cell-cell adhesion in the leaf epidermis probably by promoting the formation of endoplasmic reticulum (ER) exit site (ERES) and/or trafficking between the ER and Golgi. Triggers ARAC3/ROP6 activation required for auxin-mediated inhibition of PIN2 internalization during gravitropic responses (, PubMed:22683260). This Arabidopsis thaliana (Mouse-ear cress) protein is Guanine nucleotide exchange factor SPIKE 1.